The chain runs to 339 residues: Phenylalanine--tRNA ligase alpha subunit (339 aa).

Glu-254 is a binding site for Mg(2+).

It belongs to the class-II aminoacyl-tRNA synthetase family. Phe-tRNA synthetase alpha subunit type 1 subfamily. Tetramer of two alpha and two beta subunits. Requires Mg(2+) as cofactor.

The protein localises to the cytoplasm. It carries out the reaction tRNA(Phe) + L-phenylalanine + ATP = L-phenylalanyl-tRNA(Phe) + AMP + diphosphate + H(+). The sequence is that of Phenylalanine--tRNA ligase alpha subunit from Alkaliphilus oremlandii (strain OhILAs) (Clostridium oremlandii (strain OhILAs)).